We begin with the raw amino-acid sequence, 452 residues long: Phenylalanine-4-hydroxylase (452 aa).

A Phosphoserine; by PKA modification is found at Ser16. An ACT domain is found at Ser36 to Lys114. The Fe cation site is built by His285, His290, and Glu330.

The protein belongs to the biopterin-dependent aromatic amino acid hydroxylase family. As to quaternary structure, homodimer and homotetramer. Requires Fe(2+) as cofactor. Post-translationally, phosphorylation at Ser-16 increases basal activity and facilitates activation by the substrate phenylalanine.

It carries out the reaction (6R)-L-erythro-5,6,7,8-tetrahydrobiopterin + L-phenylalanine + O2 = (4aS,6R)-4a-hydroxy-L-erythro-5,6,7,8-tetrahydrobiopterin + L-tyrosine. It functions in the pathway amino-acid degradation; L-phenylalanine degradation; acetoacetate and fumarate from L-phenylalanine: step 1/6. N-terminal region of PAH is thought to contain allosteric binding sites for phenylalanine and to constitute an 'inhibitory' domain that regulates the activity of a catalytic domain in the C-terminal portion of the molecule. Catalyzes the hydroxylation of L-phenylalanine to L-tyrosine. The polypeptide is Phenylalanine-4-hydroxylase (PAH) (Homo sapiens (Human)).